The sequence spans 180 residues: Acireductone dioxygenase (180 aa).

Fe(2+) is bound by residues His-96, His-98, Glu-102, and His-140. Ni(2+)-binding residues include His-96, His-98, Glu-102, and His-140.

It belongs to the acireductone dioxygenase (ARD) family. As to quaternary structure, monomer. Fe(2+) serves as cofactor. Ni(2+) is required as a cofactor.

It catalyses the reaction 1,2-dihydroxy-5-(methylsulfanyl)pent-1-en-3-one + O2 = 3-(methylsulfanyl)propanoate + CO + formate + 2 H(+). It carries out the reaction 1,2-dihydroxy-5-(methylsulfanyl)pent-1-en-3-one + O2 = 4-methylsulfanyl-2-oxobutanoate + formate + 2 H(+). It functions in the pathway amino-acid biosynthesis; L-methionine biosynthesis via salvage pathway; L-methionine from S-methyl-5-thio-alpha-D-ribose 1-phosphate: step 5/6. Catalyzes 2 different reactions between oxygen and the acireductone 1,2-dihydroxy-3-keto-5-methylthiopentene (DHK-MTPene) depending upon the metal bound in the active site. Fe-containing acireductone dioxygenase (Fe-ARD) produces formate and 2-keto-4-methylthiobutyrate (KMTB), the alpha-ketoacid precursor of methionine in the methionine recycle pathway. Ni-containing acireductone dioxygenase (Ni-ARD) produces methylthiopropionate, carbon monoxide and formate, and does not lie on the methionine recycle pathway. This Synechococcus sp. (strain WH7803) protein is Acireductone dioxygenase.